A 499-amino-acid polypeptide reads, in one-letter code: Anaerobic magnesium-protoporphyrin IX monomethyl ester cyclase (499 aa).

Residues 9-145 (PHPAIGSRIP…AALENHNDLN (137 aa)) form the B12-binding domain. The 233-residue stretch at 188–420 (YGGKQAVVIQ…PPWRIFLWVK (233 aa)) folds into the Radical SAM core domain. 3 residues coordinate [4Fe-4S] cluster: Cys202, Cys206, and Cys209.

Belongs to the BchE family. It depends on [4Fe-4S] cluster as a cofactor. Adenosylcob(III)alamin serves as cofactor.

The enzyme catalyses Mg-protoporphyrin IX 13-monomethyl ester + 3 S-adenosyl-L-methionine + H2O = 3,8-divinyl protochlorophyllide a + 3 5'-deoxyadenosine + 3 L-methionine + 4 H(+). It functions in the pathway porphyrin-containing compound metabolism; bacteriochlorophyll biosynthesis (light-independent). In terms of biological role, involved in the tetrapyrrole biosynthetic pathways leading to chlorophyll and bacteriochlorophyll (BChl). Catalyzes the anaerobic formation of the isocyclic ring (E-ring) in Mg-protoporphyrin monomethyl ester (MPE) to yield protochlorophyllide a (PChlide a) via a six-electron oxidation and the formation of an oxo group at position C13 using oxygen from a water molecule. This is Anaerobic magnesium-protoporphyrin IX monomethyl ester cyclase from Synechocystis sp. (strain ATCC 27184 / PCC 6803 / Kazusa).